The sequence spans 350 residues: Uroporphyrinogen decarboxylase (350 aa).

Substrate contacts are provided by residues Arg27–Arg31, Phe46, Asp76, Tyr152, Ser207, and His321.

Belongs to the uroporphyrinogen decarboxylase family. Homodimer.

Its subcellular location is the cytoplasm. The catalysed reaction is uroporphyrinogen III + 4 H(+) = coproporphyrinogen III + 4 CO2. Its pathway is porphyrin-containing compound metabolism; protoporphyrin-IX biosynthesis; coproporphyrinogen-III from 5-aminolevulinate: step 4/4. Catalyzes the decarboxylation of four acetate groups of uroporphyrinogen-III to yield coproporphyrinogen-III. This chain is Uroporphyrinogen decarboxylase, found in Listeria welshimeri serovar 6b (strain ATCC 35897 / DSM 20650 / CCUG 15529 / CIP 8149 / NCTC 11857 / SLCC 5334 / V8).